Reading from the N-terminus, the 505-residue chain is MNWENVRVRVAPSPTGDPHVGTAYMALFNEIFAKRFKGKMILRIEDTDRTRSRQDYEENIFSALRWCGIQWDEGPDVGGPYGPYRQSERTKIYQGYVETLLKTDCAYKCFATPQELAEMRAVASTLGYRGGYDRRYRYLSPEEVASREAAGQPYTIRLKVPLSGECVFEDYSKGRVVFPWADVDDQVLVKSDGFPTYHFANVIDDHLMGITHVLRGEEWLSSTPKHLLLYEAFGWEPPVFLHMPLLLNPDGTKLSKRKNPTSIFYYRDSGYVKEAFVNFLTLMGYSMEGDEEVYSLERIIETFNPRRIGKSGAVFDIQKLDWMNKHYLNHEGSPECLLKELQGWLLNDEFFLKILPLCQSRITTLAEFINLTSFFFSGLLEYRVEELLPQALSPEKAAILLYSYVKYLEKTDQWTKETCYLGSKWLAQAFNVHHKKAIIPLLYVAITGKKQGLPLFDSIEILGKPRARARLVYAEKLLGGVPKKLAATVDKFMQREDFEEATFDL.

The 'HIGH' region motif lies at 12 to 22 (PSPTGDPHVGT). Residues 253-257 (KLSKR) carry the 'KMSKS' region motif. Position 256 (Lys-256) interacts with ATP.

Belongs to the class-I aminoacyl-tRNA synthetase family. Glutamate--tRNA ligase type 1 subfamily. Monomer.

The protein resides in the cytoplasm. It carries out the reaction tRNA(Glu) + L-glutamate + ATP = L-glutamyl-tRNA(Glu) + AMP + diphosphate. Functionally, catalyzes the attachment of glutamate to tRNA(Glu) in a two-step reaction: glutamate is first activated by ATP to form Glu-AMP and then transferred to the acceptor end of tRNA(Glu). The chain is Glutamate--tRNA ligase from Chlamydia pneumoniae (Chlamydophila pneumoniae).